The primary structure comprises 310 residues: L-lactate dehydrogenase (310 aa).

Residues V17, D38, K43, Y69, and G83 to A84 contribute to the NAD(+) site. 2 residues coordinate substrate: Q86 and R92. Residues S105, A122–N124, and S147 contribute to the NAD(+) site. N124 to D127 lines the substrate pocket. D152–R155 is a substrate binding site. Beta-D-fructose 1,6-bisphosphate is bound by residues R157 and H172. Catalysis depends on H179, which acts as the Proton acceptor. Y218 bears the Phosphotyrosine mark. Residue T227 participates in substrate binding.

It belongs to the LDH/MDH superfamily. LDH family. In terms of assembly, homotetramer.

It is found in the cytoplasm. The enzyme catalyses (S)-lactate + NAD(+) = pyruvate + NADH + H(+). It functions in the pathway fermentation; pyruvate fermentation to lactate; (S)-lactate from pyruvate: step 1/1. Allosterically activated by fructose 1,6-bisphosphate (FBP). Catalyzes the conversion of lactate to pyruvate. The sequence is that of L-lactate dehydrogenase from Halalkalibacterium halodurans (strain ATCC BAA-125 / DSM 18197 / FERM 7344 / JCM 9153 / C-125) (Bacillus halodurans).